Here is a 2333-residue protein sequence, read N- to C-terminus: Genome polyprotein (2333 aa).

The Peptidase C28 domain occupies 1–201 (MNTTNCFIAL…WKANVQRKLK (201 aa)). Residues 1-1481 (MNTTNCFIAL…SFVKRAFKRL (1481 aa)) are Cytoplasmic-facing. Catalysis depends on for leader protease activity residues Cys-51, His-148, and Asp-163. 2 disordered regions span residues 199–218 (KLKG…QSGN) and 238–265 (QLGD…NTQN). A lipid anchor (N-myristoyl glycine; by host) is attached at Gly-202. Composition is skewed to polar residues over residues 204–218 (GQSS…QSGN) and 238–251 (QLGD…SNEG). Over residues 252 to 265 (STDTTSTHTTNTQN) the composition is skewed to low complexity. The antigenic epitope stretch occupies residues 789–797 (ALLRAATYY). The Cell attachment site signature appears at 869 to 871 (RGD). Residues 1190–1354 (NVHIANLCKV…DGYKINNKLD (165 aa)) form the SF3 helicase domain. Position 1218 to 1225 (1218 to 1225 (GKSGQGKS)) interacts with ATP. The stretch at 1482–1502 (KENFEIVALCLTLLANIVIMI) is an intramembrane region. The Cytoplasmic portion of the chain corresponds to 1503–2333 (RETRKRQKMV…RWVNAVCGDA (831 aa)). The disordered stretch occupies residues 1562-1589 (NDVNSEPARPAEEQPQAEGPYTGPLERQ). O-(5'-phospho-RNA)-tyrosine is present on residues Tyr-1582, Tyr-1605, and Tyr-1629. Positions 1653–1849 (APPTDLQKMV…YCSCVSRSML (197 aa)) constitute a Peptidase C3 domain. His-1696 serves as the catalytic For protease 3C activity; Proton donor/acceptor. Active-site for protease 3C activity residues include Asp-1734 and Cys-1813. The short motif at 1879-1887 (MRKTKLAPT) is the Nuclear localization signal element. Residues 2097–2215 (RNVWDVDYSA…ASDYDLDFEA (119 aa)) form the RdRp catalytic domain. The active-site For RdRp activity is Gly-2200.

This sequence belongs to the picornaviruses polyprotein family. Interacts with host ISG15. As to quaternary structure, interacts (via R-G-D motif) with host ITGAV/ITGB6. Interacts with host MAVS; this interaction inhibits binding of host TRAF3 to MAVS, thereby suppressing interferon-mediated responses. In terms of assembly, forms homooligomers. Homohexamer. Interacts with host VIM. Interacts with host BECN1. As to quaternary structure, interacts with host DCTN3. In terms of assembly, interacts with RNA-dependent RNA polymerase; this interaction allows 3B-1 to binds 2 polymerases and act as a primer. It also allows the recruitment of the RNA-dependent RNA polymerase to host membranes. Interacts with RNA-dependent RNA polymerase; this interaction allows 3B-2 to act as a primer. As to quaternary structure, interacts with RNA-dependent RNA polymerase; this interaction allows 3B-3 to act as a primer. In terms of assembly, interacts with 3B-1; this interaction allows 3B-1 to binds 2 polymerases and act as a primer. It also allows the recruitment of the RNA-dependent RNA polymerase to host membranes. Interacts with 3B-2; this interaction allows 3B-2 to act as a primer. Interacts with 3B-3; this interaction allows 3B-3 to act as a primer. Post-translationally, removes six residues from its own C-terminus, generating sLb(pro). In terms of processing, specific enzymatic cleavages in vivo by the viral proteases yield a variety of precursors and mature proteins. The polyprotein seems to be cotranslationally cleaved at the 2A/2B junction by a ribosomal skip from one codon to the next without formation of a peptide bond. This process would release the L-P1-2A peptide from the translational complex. During virion maturation, immature virions are rendered infectious following cleavage of VP0 into VP4 and VP2. This maturation seems to be an autocatalytic event triggered by the presence of RNA in the capsid and is followed by a conformational change of the particle. Post-translationally, myristoylation is required during RNA encapsidation and formation of the mature virus particle. In terms of processing, uridylylated by the polymerase and covalently linked to the 5'-end of genomic RNA. These uridylylated forms act as a nucleotide-peptide primer for the polymerase.

It is found in the host nucleus. The protein resides in the host cytoplasm. Its subcellular location is the virion. It localises to the host endoplasmic reticulum membrane. The protein localises to the host cytoplasmic vesicle membrane. It catalyses the reaction Autocatalytically cleaves itself from the polyprotein of the foot-and-mouth disease virus by hydrolysis of a Lys-|-Gly bond, but then cleaves host cell initiation factor eIF-4G at bonds -Gly-|-Arg- and -Lys-|-Arg-.. It carries out the reaction a ribonucleoside 5'-triphosphate + H2O = a ribonucleoside 5'-diphosphate + phosphate + H(+). The enzyme catalyses RNA(n) + a ribonucleoside 5'-triphosphate = RNA(n+1) + diphosphate. The catalysed reaction is Selective cleavage of Gln-|-Gly bond in the poliovirus polyprotein. In other picornavirus reactions Glu may be substituted for Gln, and Ser or Thr for Gly.. In terms of biological role, autocatalytically cleaves itself from the polyprotein at the L/VP0 junction. Also cleaves the host translation initiation factors EIF4G1 and EIF4G3, in order to shut off the capped cellular mRNA transcription. Plays a role in counteracting host innate antiviral response using diverse mechanisms. Possesses a deubiquitinase activity acting on both 'Lys-48' and 'Lys-63'-linked polyubiquitin chains. In turn, inhibits the ubiquitination and subsequent activation of key signaling molecules of type I IFN response such as host RIGI, TBK1, TRAF3 and TRAF6. Inhibits host NF-kappa-B activity by inducing a decrease in RELA mRNA levels. Cleaves a peptide bond in the C-terminus of host ISG15, resulting in the damaging of this modifier that can no longer be attached to target proteins. Also cleaves host G3BP1 and G3BP2 in order to inhibit cytoplasmic stress granules assembly. Functionally, lies on the inner surface of the capsid shell. After binding to the host receptor, the capsid undergoes conformational changes. Capsid protein VP4 is released, capsid protein VP1 N-terminus is externalized, and together, they shape a pore in the host membrane through which the viral genome is translocated into the host cell cytoplasm. After genome has been released, the channel shrinks. Its function is as follows. Forms an icosahedral capsid of pseudo T=3 symmetry with capsid proteins VP1 and VP3. The capsid is composed of 60 copies of each capsid protein organized in the form of twelve pentamers and encloses the viral positive strand RNA genome. Upon acidifcation in the endosome, dissociates into pentamers. Forms an icosahedral capsid of pseudo T=3 symmetry with capsid proteins VP0 and VP3. The capsid is composed of 60 copies of each capsid protein organized in the form of twelve pentamers and encloses the viral positive strand RNA genome. Upon acidifcation in the endosome, dissociates into pentamers. In terms of biological role, forms an icosahedral capsid of pseudo T=3 symmetry with capsid proteins VP2 and VP3. The capsid is composed of 60 copies of each capsid protein organized in the form of twelve pentamers and encloses the viral positive strand RNA genome. Mediates cell entry by attachment to an integrin receptor, usually host ITGAV/ITGB6. In addition, targets host MAVS to suppress type I IFN pathway. Upon acidifcation in the endosome, dissociates into pentamers. Functionally, mediates self-processing of the polyprotein by a translational effect termed 'ribosome skipping'. Mechanistically, 2A-mediated cleavage occurs between the C-terminal glycine and the proline of the downstream protein 2B. In the case of foot-and-mouth disease virus, the 2A oligopeptide is post-translationally 'trimmed' from the C-terminus of the upstream protein 1D by 3C proteinase. Its function is as follows. Plays an essential role in the virus replication cycle by acting as a viroporin. Creates a pore in the host endoplasmic reticulum and as a consequence releases Ca2+ in the cytoplasm of infected cell. In turn, high levels of cytoplasmic calcium may trigger membrane trafficking and transport of viral ER-associated proteins to viroplasms, sites of viral genome replication. Associates with and induces structural rearrangements of intracellular membranes. Triggers host autophagy by interacting with host BECN1 and thereby promotes viral replication. Participates in viral replication and interacts with host DHX9. Displays RNA-binding, nucleotide binding and NTPase activities. May play a role in virion morphogenesis and viral RNA encapsidation by interacting with the capsid protein VP3. In terms of biological role, plays important roles in virus replication, virulence and host range. Functionally, covalently linked to the 5'-end of both the positive-strand and negative-strand genomic RNAs. Acts as a genome-linked replication primer. Its function is as follows. Cysteine protease that generates mature viral proteins from the precursor polyprotein. In addition to its proteolytic activity, binds to viral RNA and thus influences viral genome replication. RNA and substrate bind cooperatively to the protease. RNA-directed RNA polymerase 3D-POL replicates genomic and antigenomic RNA by recognizing replications specific signals. Covalently attaches UMP to a tyrosine of VPg, which is used to prime RNA synthesis. The positive stranded RNA genome is first replicated at virus induced membranous vesicles, creating a dsRNA genomic replication form. This dsRNA is then used as template to synthesize positive stranded RNA genomes. ss(+)RNA genomes are either translated, replicated or encapsidated. The sequence is that of Genome polyprotein from Foot-and-mouth disease virus (isolate Bovine/United Kingdom/A12Valle119/1932 serotype A) (FMDV).